The following is a 398-amino-acid chain: Putative glutamate--cysteine ligase 2 (398 aa).

It belongs to the glutamate--cysteine ligase type 2 family. YbdK subfamily.

The catalysed reaction is L-cysteine + L-glutamate + ATP = gamma-L-glutamyl-L-cysteine + ADP + phosphate + H(+). ATP-dependent carboxylate-amine ligase which exhibits weak glutamate--cysteine ligase activity. The sequence is that of Putative glutamate--cysteine ligase 2 from Micrococcus luteus (strain ATCC 4698 / DSM 20030 / JCM 1464 / CCM 169 / CCUG 5858 / IAM 1056 / NBRC 3333 / NCIMB 9278 / NCTC 2665 / VKM Ac-2230) (Micrococcus lysodeikticus).